The primary structure comprises 330 residues: Erlin-2-B (330 aa).

The Cytoplasmic segment spans residues 1–2 (MS). Residues 3–23 (HAGAIAALGVALIAAALFSAI) form a helical membrane-spanning segment. The Lumenal segment spans residues 24 to 330 (HKIEEGHVGV…NEPAAAEELK (307 aa)). N106 carries N-linked (GlcNAc...) asparagine glycosylation. The segment at 308 to 330 (SSSAGPRVQSAKRNEPAAAEELK) is disordered. Over residues 319–330 (KRNEPAAAEELK) the composition is skewed to basic and acidic residues.

It belongs to the band 7/mec-2 family.

The protein resides in the endoplasmic reticulum membrane. Functionally, mediates the endoplasmic reticulum-associated degradation (ERAD) of inositol 1,4,5-trisphosphate receptors (IP3Rs). Promotes sterol-accelerated ERAD of HMGCR. Involved in regulation of cellular cholesterol homeostasis by regulation the SREBP signaling pathway. This is Erlin-2-B (erlin2-b) from Xenopus laevis (African clawed frog).